The following is a 147-amino-acid chain: MKVILKKDVKKLGKKGDVVSVSDGYARNYLIPRGLAEEATRGNITQLKEKEKIKEKKHQQKIEEARDMASKLEKEKFVIKVKSGENGRLFGSVTTKDIAETVKKAGYKIDKRKIDLDDNIKALGTYRVPVKIFEDVVATLKIQVVEA.

Belongs to the bacterial ribosomal protein bL9 family.

In terms of biological role, binds to the 23S rRNA. This Halothermothrix orenii (strain H 168 / OCM 544 / DSM 9562) protein is Large ribosomal subunit protein bL9.